A 186-amino-acid polypeptide reads, in one-letter code: Elongation factor P (186 aa).

This sequence belongs to the elongation factor P family.

The protein localises to the cytoplasm. It participates in protein biosynthesis; polypeptide chain elongation. Functionally, involved in peptide bond synthesis. Stimulates efficient translation and peptide-bond synthesis on native or reconstituted 70S ribosomes in vitro. Probably functions indirectly by altering the affinity of the ribosome for aminoacyl-tRNA, thus increasing their reactivity as acceptors for peptidyl transferase. The sequence is that of Elongation factor P from Cupriavidus pinatubonensis (strain JMP 134 / LMG 1197) (Cupriavidus necator (strain JMP 134)).